A 204-amino-acid polypeptide reads, in one-letter code: N-(5'-phosphoribosyl)anthranilate isomerase (204 aa).

Belongs to the TrpF family.

The enzyme catalyses N-(5-phospho-beta-D-ribosyl)anthranilate = 1-(2-carboxyphenylamino)-1-deoxy-D-ribulose 5-phosphate. The protein operates within amino-acid biosynthesis; L-tryptophan biosynthesis; L-tryptophan from chorismate: step 3/5. This Bacillus cereus (strain AH187) protein is N-(5'-phosphoribosyl)anthranilate isomerase.